The chain runs to 273 residues: MLKERLENVRGTNPLIHNITNYVTVNDCANILLACGASPIMADDIGEVEEITSICRGLNINIGTLNENTIESMLKAGKMANKLKHPVILDPVGVGASKLRRQTALKLLEEVKFTVIRGNISEIKVLALGQGITKGVDADVNDKVKDDTLDNVINFAKGFSKKTGAVIAITGAIDIIANESKAYVVRNGNPNMSKITGTGCMLSAMTAAYISANVDSPLEATLASVCAMGICGELAYNRLSKRDGNSSYRNYIIDEVFNLDGDKLDDAARYESY.

M41 is a substrate binding site. 2 residues coordinate ATP: R117 and T170. G197 contributes to the substrate binding site.

It belongs to the Thz kinase family. Mg(2+) serves as cofactor.

It carries out the reaction 5-(2-hydroxyethyl)-4-methylthiazole + ATP = 4-methyl-5-(2-phosphooxyethyl)-thiazole + ADP + H(+). Its pathway is cofactor biosynthesis; thiamine diphosphate biosynthesis; 4-methyl-5-(2-phosphoethyl)-thiazole from 5-(2-hydroxyethyl)-4-methylthiazole: step 1/1. Catalyzes the phosphorylation of the hydroxyl group of 4-methyl-5-beta-hydroxyethylthiazole (THZ). The protein is Hydroxyethylthiazole kinase of Clostridium acetobutylicum (strain ATCC 824 / DSM 792 / JCM 1419 / IAM 19013 / LMG 5710 / NBRC 13948 / NRRL B-527 / VKM B-1787 / 2291 / W).